Reading from the N-terminus, the 377-residue chain is Leukocyte elastase inhibitor (377 aa).

Methionine 1 is subject to N-acetylmethionine.

This sequence belongs to the serpin family. Ov-serpin subfamily.

It localises to the cytoplasm. Its function is as follows. Regulates the activity of the neutrophil proteases. The chain is Leukocyte elastase inhibitor (serpinb1) from Xenopus laevis (African clawed frog).